We begin with the raw amino-acid sequence, 198 residues long: Calcium channel flower (198 aa).

The next 3 helical transmembrane spans lie at 36–56 (LGIV…LSII), 67–89 (IIQM…VCIE), and 114–134 (AVPP…GLIF).

It belongs to the calcium channel flower family. As to quaternary structure, homomultimer. Associates with the dally/ magu complex.

Its subcellular location is the cell membrane. The protein resides in the cytoplasmic vesicle. The protein localises to the secretory vesicle. It localises to the synaptic vesicle membrane. It is found in the presynaptic cell membrane. Its subcellular location is the endosome. With respect to regulation, channel activity is inhibited by La(3+), which reduces Ca(2+) influx and thus inhibits it's function in promoting activity-dependent bulk endocytosis (ADBE) in response to high stimuli. In terms of biological role, transmembrane protein which mediates synaptic endocytosis, fitness-based cell culling, neuronal culling, morphogen gradient scaling, and calcium transport. Regulates synaptic endocytosis and hence couples exo- with endocytosis. Controls two major modes of synaptic vesicle (SV) endocytosis in the synaptic boutons of neuromuscular junctions (NMJs); Ca(2+) channel-independent Clathrin-mediated endocytosis (CME) in response to mild stimulation, and Ca(2+) channel-dependent activity-dependent bulk endocytosis (ADBE) in response to strong stimulation. Functions in ADBE and subsequent SV reformation from bulk endosomes by initiating Ca(2+) channel-dependent phosphatidylinositol 4,5-bisphosphate (PtdIns(4,5)P2) compartmentalization in synaptic boutons. There it acts at the periactive zone to provide the low Ca(2+) levels required to initiate Calcineurin activation and upregulate PtdIns(4,5)P2. Conversely PtdIns(4,5)P2 enhances fwe Ca(2+) channel-activity, establishing a positive feedback loop that induces PtdIns(4,5)P2 microdomain at the periactive zone. These microdomains trigger bulk membrane invagination (i.e. ADBE) by triggering actin polymerization while also promoting localization of fwe to bulk endosomes, thereby removing the ADBE trigger to reduce endocytosis and prevent excess membrane uptake. PtdIns(4,5)P2 then promotes SV reformation from the bulk endosomes, to coordinate ADBE and subsequent SV reformation. Different combinations of the flower isoforms at the cell membrane are also required for the identification and elimination of suboptimal or supernumerary cells during development, regeneration, and adulthood. Required for the recognition and elimination of unfit cells in the developing wing during cell competition. In the developing pupal retina, mediates the elimination of unwanted postmitotic neurons, including supernumerary photoreceptor neurons that form at the periphery of the retina and are contained within incomplete ommatidia units. Also required for efficient elimination and replacement of old neurons by newly generated neurons during regeneration in the adult brain following mechanical injury. Downstream of the flower fitness fingerprints, cells identified as unwanted or unfit are eliminated via apoptosis through the expression of ahuizotl (azot). However, the cells marked for elimination by the flower isoforms only undergo apoptosis if additional thresholds are met; (1) their neighboring fit/healthy cells express different levels of the fwe isoforms, and (2) the levels of the protective signal SPARC expressed by the loser or unwanted cells are unable to inhibit caspase activation. These additional thresholds for flower-mediated apoptosis, allows useful cells to recover from transient and limited stress before they are unnecessarily eliminated. Functions with dally and magu in a mechanism of scaling, which utilises apoptosis to ensure that the dpp morphogen gradient, which mediates organ growth, remains proportional to the size of the growing wing. In this mechanism, fwe represses dally- and Magu-dependent activity in expanding the gradient, and dally/Magu inhibits fwe-dependent apoptosis to keep cell death rate low. When the levels of these different proteins are optimally regulated the gradient correctly scales with organ growth but when this fails, fwe-mediated apoptosis is activated to trim the developing tissue to match the correct size of the gradient. The chain is Calcium channel flower from Drosophila persimilis (Fruit fly).